A 67-amino-acid polypeptide reads, in one-letter code: Alpha-toxin Cn12 (67 aa).

The LCN-type CS-alpha/beta domain occupies 1-66; the sequence is RDGYPLASNG…WGDSGTGPCR (66 aa). 4 disulfides stabilise this stretch: Cys-11–Cys-65, Cys-15–Cys-40, Cys-25–Cys-45, and Cys-29–Cys-47.

As to expression, expressed by the venom gland.

It localises to the secreted. Alpha toxins bind voltage-independently at site-3 of sodium channels (Nav) and inhibit the inactivation of the activated channels, thereby blocking neuronal transmission. This toxin binds, in vitro, to sodium channels and inhibits the inactivation of the activated channels. Seems not toxic to mice, crickets and sweet-water shrimps. This is Alpha-toxin Cn12 from Centruroides noxius (Mexican scorpion).